Consider the following 194-residue polypeptide: Probable calcium-binding protein CML45 (194 aa).

A compositionally biased stretch (basic and acidic residues) spans 52-63; that stretch reads NNKDQQETLTKQ. A disordered region spans residues 52–81; it reads NNKDQQETLTKQEDDDDDDDDDDDDDDDDI. The segment covering 64–81 has biased composition (acidic residues); sequence EDDDDDDDDDDDDDDDDI. EF-hand domains lie at 76-98, 122-157, and 160-194; these read DDDDDIDISREEAEMVMRSLGLF, ASLEEVKQAFDVFDENKDGFIDAIELQRVLTILGFK, and SYLDNCLVMIRSLDGNKDGKIDFNEFVKFMETSFY. Positions 135, 137, 139, 146, 173, 175, 177, 179, and 184 each coordinate Ca(2+).

In terms of biological role, potential calcium sensor. This chain is Probable calcium-binding protein CML45, found in Arabidopsis thaliana (Mouse-ear cress).